Here is a 264-residue protein sequence, read N- to C-terminus: Hemin import ATP-binding protein HmuV (264 aa).

Positions 2-241 (IEVSGVSVRL…ETMLSVFGLR (240 aa)) constitute an ABC transporter domain. 34–41 (GPNGSGKT) contributes to the ATP binding site.

The protein belongs to the ABC transporter superfamily. Heme (hemin) importer (TC 3.A.1.14.5) family. In terms of assembly, the complex is composed of two ATP-binding proteins (HmuV), two transmembrane proteins (HmuU) and a solute-binding protein (HmuT).

The protein localises to the cell inner membrane. Part of the ABC transporter complex HmuTUV involved in hemin import. Responsible for energy coupling to the transport system. This Rhizobium leguminosarum protein is Hemin import ATP-binding protein HmuV.